The following is a 235-amino-acid chain: Thymidylate kinase (235 aa).

ATP is bound at residue 10–17; the sequence is GINGVEKS.

Belongs to the thymidylate kinase family.

It carries out the reaction dTMP + ATP = dTDP + ADP. The protein operates within pyrimidine metabolism; dTTP biosynthesis. Catalyzes the conversion of dTMP to dTDP. This African swine fever virus (isolate Pig/Kenya/KEN-50/1950) (ASFV) protein is Thymidylate kinase (TMK).